A 155-amino-acid chain; its full sequence is Small ribosomal subunit protein uS7c (155 aa).

Belongs to the universal ribosomal protein uS7 family. As to quaternary structure, part of the 30S ribosomal subunit.

The protein localises to the plastid. It localises to the chloroplast. Its function is as follows. One of the primary rRNA binding proteins, it binds directly to 16S rRNA where it nucleates assembly of the head domain of the 30S subunit. The protein is Small ribosomal subunit protein uS7c (rps7) of Staurastrum punctulatum (Green alga).